Consider the following 406-residue polypeptide: Heparan sulfate glucosamine 3-O-sulfotransferase 3A1 (406 aa).

Topologically, residues 1 to 24 are cytoplasmic; that stretch reads MAPPGPASALSTSAEPLSRSIFRK. A helical; Signal-anchor for type II membrane protein transmembrane segment spans residues 25 to 43; sequence FLLMLCSLLTSLYVFYCLA. Topologically, residues 44 to 406 are lumenal; that stretch reads ERCQTLSGPV…MTGHDFGWDG (363 aa). Basic residues predominate over residues 92–102; it reads QLPQWRRRRPP. The interval 92 to 134 is disordered; sequence QLPQWRRRRPPAPRDDGEEAAWEEESPGLSGGPGGSGAGSTVA. A compositionally biased stretch (acidic residues) spans 107-117; the sequence is DGEEAAWEEES. The span at 120 to 129 shows a compositional bias: gly residues; that stretch reads LSGGPGGSGA. 162 to 166 is a 3'-phosphoadenylyl sulfate binding site; sequence KGGTR. Substrate is bound by residues arginine 166, 184–190, and 215–218; these read EPHFFDR and KTPS. 3'-phosphoadenylyl sulfate contacts are provided by arginine 243 and serine 251. Substrate is bound at residue 255–259; the sequence is QTLSK. Residue asparagine 273 is glycosylated (N-linked (GlcNAc...) asparagine). 283–284 contacts substrate; it reads WS. N-linked (GlcNAc...) asparagine glycosylation occurs at asparagine 344. Cysteine 351 and cysteine 363 are disulfide-bonded. 367–370 serves as a coordination point for substrate; sequence TKGR. 368 to 372 is a binding site for 3'-phosphoadenylyl sulfate; sequence KGRTH.

The protein belongs to the sulfotransferase 1 family. As to expression, ubiquitous. Most abundant in heart and placenta, followed by liver and kidney.

The protein localises to the golgi apparatus membrane. The enzyme catalyses alpha-D-glucosaminyl-[heparan sulfate](n) + 3'-phosphoadenylyl sulfate = 3-sulfo-alpha-D-glucosaminyl-[heparan sulfate](n) + adenosine 3',5'-bisphosphate + H(+). Its function is as follows. Sulfotransferase that utilizes 3'-phospho-5'-adenylyl sulfate (PAPS) to catalyze the transfer of a sulfo group to an N-unsubstituted glucosamine linked to a 2-O-sulfo iduronic acid unit on heparan sulfate. Catalyzes the O-sulfation of glucosamine in IdoUA2S-GlcNS and also in IdoUA2S-GlcNH2. The substrate-specific O-sulfation generates an enzyme-modified heparan sulfate which acts as a binding receptor to Herpes simplex virus-1 (HSV-1) and permits its entry. Unlike HS3ST1/3-OST-1, does not convert non-anticoagulant heparan sulfate to anticoagulant heparan sulfate. In Homo sapiens (Human), this protein is Heparan sulfate glucosamine 3-O-sulfotransferase 3A1 (HS3ST3A1).